The primary structure comprises 452 residues: uncharacterized protein (452 aa).

This is an uncharacterized protein from Chlamydia pneumoniae (Chlamydophila pneumoniae).